The following is a 122-amino-acid chain: Large ribosomal subunit protein uL14 (122 aa).

This sequence belongs to the universal ribosomal protein uL14 family. In terms of assembly, part of the 50S ribosomal subunit. Forms a cluster with proteins L3 and L19. In the 70S ribosome, L14 and L19 interact and together make contacts with the 16S rRNA in bridges B5 and B8.

Its function is as follows. Binds to 23S rRNA. Forms part of two intersubunit bridges in the 70S ribosome. The protein is Large ribosomal subunit protein uL14 of Bdellovibrio bacteriovorus (strain ATCC 15356 / DSM 50701 / NCIMB 9529 / HD100).